The following is a 97-amino-acid chain: Large ribosomal subunit protein uL23 (97 aa).

The protein belongs to the universal ribosomal protein uL23 family. Part of the 50S ribosomal subunit. Contacts protein L29, and trigger factor when it is bound to the ribosome.

Functionally, one of the early assembly proteins it binds 23S rRNA. One of the proteins that surrounds the polypeptide exit tunnel on the outside of the ribosome. Forms the main docking site for trigger factor binding to the ribosome. This Brucella canis (strain ATCC 23365 / NCTC 10854 / RM-666) protein is Large ribosomal subunit protein uL23.